The chain runs to 86 residues: Alpha-toxin TbTx5 (86 aa).

Residues 1 to 19 (MNDFVFLVVACLLTAGTEG) form the signal peptide. In terms of domain architecture, LCN-type CS-alpha/beta spans 21–82 (KDGYPVEGDN…EPTKTNGRCK (62 aa)). Intrachain disulfides connect Cys31–Cys81, Cys35–Cys57, Cys43–Cys64, and Cys47–Cys66. Pro83 is modified (proline amide).

The protein belongs to the long (4 C-C) scorpion toxin superfamily. Sodium channel inhibitor family. Alpha subfamily. As to expression, expressed by the venom gland.

It localises to the secreted. Its function is as follows. Alpha toxins bind voltage-independently at site-3 of sodium channels (Nav) and inhibit the inactivation of the activated channels, thereby blocking neuronal transmission. This Tityus bahiensis (Brazilian scorpion) protein is Alpha-toxin TbTx5.